The sequence spans 430 residues: Synaptotagmin-11 (430 aa).

Topologically, residues methionine 1–proline 15 are vesicular. A helical transmembrane segment spans residues valine 16–valine 36. At tryptophan 37 to tyrosine 430 the chain is on the cytoplasmic side. The disordered stretch occupies residues arginine 132 to aspartate 154. A Phosphoserine modification is found at serine 133. The segment covering proline 140 to serine 150 has biased composition (low complexity). C2 domains lie at methionine 156–arginine 278 and serine 290–histidine 425. Ca(2+) contacts are provided by aspartate 249, serine 252, and aspartate 255.

This sequence belongs to the synaptotagmin family. As to quaternary structure, homodimer. Can also form heterodimers. Interacts with PRKN. Interacts (via C2 2 domain) with AGO2 and SND1; the interaction with SND1 is direct. Interacts with KIF1A; the interaction increases in presence of calcium. Requires Ca(2+) as cofactor. Post-translationally, ubiquitinated, at least by PRKN, and targeted to the proteasome complex for degradation. Ubiquitination is inhibited by ATP13A2. In terms of tissue distribution, highly expressed in brain and at lower levels in other tissues.

It is found in the cytoplasmic vesicle membrane. The protein resides in the perikaryon. Its subcellular location is the golgi apparatus. It localises to the trans-Golgi network membrane. The protein localises to the recycling endosome membrane. It is found in the lysosome membrane. The protein resides in the cytoplasmic vesicle. Its subcellular location is the phagosome. It localises to the cell projection. The protein localises to the axon. It is found in the dendrite. The protein resides in the postsynaptic density. Its subcellular location is the clathrin-coated vesicle membrane. Its function is as follows. Synaptotagmin family member involved in vesicular and membrane trafficking which does not bind Ca(2+). Inhibits clathrin-mediated and bulk endocytosis in neurons, functions to ensure precision in vesicle retrieval. Plays an important role in dopamine transmission by regulating endocytosis and the vesicle-recycling process. Essential component of a neuronal vesicular trafficking pathway that differs from the synaptic vesicle trafficking pathway but is crucial for development and synaptic plasticity. In macrophages and microglia, inhibits the conventional cytokine secretion, of at least IL6 and TNF, and phagocytosis. In astrocytes, regulates lysosome exocytosis, mechanism required for the repair of injured astrocyte cell membrane. Required for the ATP13A2-mediated regulation of the autophagy-lysosome pathway. The chain is Synaptotagmin-11 from Rattus norvegicus (Rat).